Reading from the N-terminus, the 932-residue chain is Transcription initiation factor TFIID subunit 3 (932 aa).

4 disordered regions span residues 130 to 201, 213 to 347, 403 to 465, and 480 to 579; these read PIVS…LSTK, REPL…PSAM, REPD…DNSW, and LGAP…PWRE. The segment covering 158 to 171 has biased composition (acidic residues); the sequence is LEEDDEMEEEEVIN. Phosphoserine is present on residues S183, S199, S229, and S243. An N6-acetyllysine modification is found at K266. The span at 266–283 shows a compositional bias: polar residues; sequence KSFTPKTKTKASSPGQKT. Residues S291, S297, and S301 each carry the phosphoserine modification. Positions 408 to 423 are enriched in low complexity; the sequence is FEFSSGSESEGDTFTS. Residues 436-446 show a composition bias toward polar residues; the sequence is KASTSSNNFTK. Residues 447-461 show a composition bias toward low complexity; it reads SLATPLPLSSGTSSS. T502 carries the phosphothreonine modification. The segment covering 505–515 has biased composition (basic and acidic residues); that stretch reads PLHKGYEEKAK. The span at 524 to 538 shows a compositional bias: basic residues; sequence KKLKKELKTKLKKKE. Residues 539-579 are compositionally biased toward basic and acidic residues; it reads KQRDRERERERNKERSKEKDKMREREKEKEAGKELKYPWRE. A Glycyl lysine isopeptide (Lys-Gly) (interchain with G-Cter in SUMO2) cross-link involves residue K582. The tract at residues 607–657 is disordered; that stretch reads KDGIVRREREKHKDKKKDRERSKREKDKRERERLKEKNREDKIKAPPTQLV. The segment covering 623–650 has biased composition (basic and acidic residues); the sequence is KDRERSKREKDKRERERLKEKNREDKIK. S669 bears the Phosphoserine mark. The segment at 681 to 746 is disordered; it reads AFSPMLPEKL…EKEKEKHKHE (66 aa). Basic and acidic residues predominate over residues 689-702; sequence KLFEEKEKPKEKER. The segment covering 703–714 has biased composition (basic residues); that stretch reads KKDKKEKKKKKE. Residues 715 to 740 are compositionally biased toward basic and acidic residues; it reads KEKEKEKKEREREKERREREKREKEK. A Glycyl lysine isopeptide (Lys-Gly) (interchain with G-Cter in SUMO2) cross-link involves residue K749. Residue S758 is modified to Phosphoserine. Position 779 is an N6-acetyllysine (K779). The PHD-type zinc finger occupies 867–917; it reads IWICPGCNKPDDGSPMIGCDDCDDWYHWPCVGIMAAPPEEMQWFCPKCANK.

This sequence belongs to the TAF3 family. Component of the TFIID basal transcription factor complex, composed of TATA-box-binding protein TBP, and a number of TBP-associated factors (TAFs), including TAF1, TAF2, TAF3, TAF4, TAF5, TAF6, TAF7, TAF8, TAF9, TAF10, TAF11, TAF12 and TAF13. Interacts with TAF10 via histone fold. Interacts with TAF13, TBP, SAP130 and GCN5L2. Interacts with TBPL2.

The protein resides in the nucleus. In terms of biological role, the TFIID basal transcription factor complex plays a major role in the initiation of RNA polymerase II (Pol II)-dependent transcription. TFIID recognizes and binds promoters with or without a TATA box via its subunit TBP, a TATA-box-binding protein, and promotes assembly of the pre-initiation complex (PIC). The TFIID complex consists of TBP and TBP-associated factors (TAFs), including TAF1, TAF2, TAF3, TAF4, TAF5, TAF6, TAF7, TAF8, TAF9, TAF10, TAF11, TAF12 and TAF13. The TFIID complex structure can be divided into 3 modules TFIID-A, TFIID-B, and TFIID-C. TAF3 forms the TFIID-A module together with TAF5 and TBP. Required in complex with TBPL2 for the differentiation of myoblasts into myocytes. The TAF3-TBPL2 complex replaces TFIID at specific promoters at an early stage in the differentiation process. The protein is Transcription initiation factor TFIID subunit 3 (Taf3) of Mus musculus (Mouse).